A 452-amino-acid polypeptide reads, in one-letter code: uncharacterized protein (452 aa).

Residues 3–61 (KVKIGEKYEVDITSMGHEGEGVGRIDGIAVFVKGALKGERVIVEIEEVHKNYLKGYTVK) form the TRAM domain. [4Fe-4S] cluster-binding residues include Cys-74, Cys-80, Cys-83, and Cys-160. The S-adenosyl-L-methionine site is built by Gln-284, Tyr-313, Glu-334, and Asp-382. Cys-409 acts as the Nucleophile in catalysis.

The protein belongs to the class I-like SAM-binding methyltransferase superfamily. RNA M5U methyltransferase family.

This is an uncharacterized protein from Caldanaerobacter subterraneus subsp. tengcongensis (strain DSM 15242 / JCM 11007 / NBRC 100824 / MB4) (Thermoanaerobacter tengcongensis).